A 583-amino-acid chain; its full sequence is Aspartate--tRNA ligase (583 aa).

E174 is a binding site for L-aspartate. The aspartate stretch occupies residues 198–201; it reads QITK. Residue R220 coordinates L-aspartate. Residues 220-222 and Q229 contribute to the ATP site; that span reads RDE. H443 is a binding site for L-aspartate. E477 contributes to the ATP binding site. An L-aspartate-binding site is contributed by R484. 529–532 is a binding site for ATP; it reads GLDR.

It belongs to the class-II aminoacyl-tRNA synthetase family. Type 1 subfamily. In terms of assembly, homodimer.

The protein resides in the cytoplasm. The catalysed reaction is tRNA(Asp) + L-aspartate + ATP = L-aspartyl-tRNA(Asp) + AMP + diphosphate. Functionally, catalyzes the attachment of L-aspartate to tRNA(Asp) in a two-step reaction: L-aspartate is first activated by ATP to form Asp-AMP and then transferred to the acceptor end of tRNA(Asp). This chain is Aspartate--tRNA ligase, found in Streptococcus suis (strain 98HAH33).